A 175-amino-acid chain; its full sequence is SKP1-like protein 20 (175 aa).

The interval 117 to 175 is interaction with the F-box domain of F-box proteins; the sequence is ILAANYLNIKGLLDLTCQTVADMIKGKTPEEIRKTFNIKNDFTPEEEEEVRRENQWAFE.

It belongs to the SKP1 family. In terms of assembly, part of a SCF (SKP1-CUL1-F-box protein) E3 ubiquitin-protein ligase complex. Interacts with rice black streaked dwarf virus RBSDV protein P7-2. Is able to form the SCF complex together with CUL1 and the viral P7-2 protein. Interacts with D3.

It localises to the nucleus. It functions in the pathway protein modification; protein ubiquitination. Functionally, involved in ubiquitination and subsequent proteasomal degradation of target proteins. Together with CUL1, a RING-box and a F-box protein, it forms a SCF E3 ubiquitin ligase complex. The functional specificity of this complex depends on the type of F-box protein. In the SCF complex, it serves as an adapter that links the F-box protein to CUL1. This is SKP1-like protein 20 from Oryza sativa subsp. japonica (Rice).